Reading from the N-terminus, the 673-residue chain is UvrABC system protein B (673 aa).

In terms of domain architecture, Helicase ATP-binding spans 30 to 417 (NSILLGNKYQ…SSVVVDQIIR (388 aa)). ATP is bound at residue 43 to 50 (GVTGSGKT). Residues 96 to 119 (YYDYYQPESYVPSKDLFIEKEATI) carry the Beta-hairpin motif. Residues 434 to 600 (QMEDLYSEIQ…TIVKKIQNIL (167 aa)) form the Helicase C-terminal domain. The 36-residue stretch at 627-662 (KKLIDKLKFDLEEAVNDERFEDAIVLRDKIKELSSK) folds into the UVR domain.

It belongs to the UvrB family. As to quaternary structure, forms a heterotetramer with UvrA during the search for lesions. Interacts with UvrC in an incision complex.

The protein localises to the cytoplasm. Its function is as follows. The UvrABC repair system catalyzes the recognition and processing of DNA lesions. A damage recognition complex composed of 2 UvrA and 2 UvrB subunits scans DNA for abnormalities. Upon binding of the UvrA(2)B(2) complex to a putative damaged site, the DNA wraps around one UvrB monomer. DNA wrap is dependent on ATP binding by UvrB and probably causes local melting of the DNA helix, facilitating insertion of UvrB beta-hairpin between the DNA strands. Then UvrB probes one DNA strand for the presence of a lesion. If a lesion is found the UvrA subunits dissociate and the UvrB-DNA preincision complex is formed. This complex is subsequently bound by UvrC and the second UvrB is released. If no lesion is found, the DNA wraps around the other UvrB subunit that will check the other stand for damage. The protein is UvrABC system protein B of Borreliella burgdorferi (strain ATCC 35210 / DSM 4680 / CIP 102532 / B31) (Borrelia burgdorferi).